A 422-amino-acid polypeptide reads, in one-letter code: Histidine--tRNA ligase (422 aa).

The protein belongs to the class-II aminoacyl-tRNA synthetase family. In terms of assembly, homodimer.

Its subcellular location is the cytoplasm. It catalyses the reaction tRNA(His) + L-histidine + ATP = L-histidyl-tRNA(His) + AMP + diphosphate + H(+). The polypeptide is Histidine--tRNA ligase (Syntrophomonas wolfei subsp. wolfei (strain DSM 2245B / Goettingen)).